The sequence spans 102 residues: Protein translation factor SUI1 homolog (102 aa).

It belongs to the SUI1 family.

The polypeptide is Protein translation factor SUI1 homolog (Methanococcus vannielii).